Here is a 54-residue protein sequence, read N- to C-terminus: uncharacterized protein (54 aa).

Residues 32 to 52 traverse the membrane as a helical segment; the sequence is LFSLLVLIILCFIDPILFYFI.

It is found in the host membrane. This is an uncharacterized protein from Cassava vein mosaic virus (CsVMV).